Consider the following 600-residue polypeptide: NADH-quinone oxidoreductase subunit C/D (600 aa).

The interval 1–190 (MVNNMTDLTA…DPFELTKAKQ (190 aa)) is NADH dehydrogenase I subunit C. Residues 214-600 (DFMFLNLGPN…IDFVMSDVDR (387 aa)) are NADH dehydrogenase I subunit D.

This sequence in the N-terminal section; belongs to the complex I 30 kDa subunit family. In the C-terminal section; belongs to the complex I 49 kDa subunit family. As to quaternary structure, NDH-1 is composed of 13 different subunits. Subunits NuoB, CD, E, F, and G constitute the peripheral sector of the complex.

It is found in the cell inner membrane. It catalyses the reaction a quinone + NADH + 5 H(+)(in) = a quinol + NAD(+) + 4 H(+)(out). NDH-1 shuttles electrons from NADH, via FMN and iron-sulfur (Fe-S) centers, to quinones in the respiratory chain. The immediate electron acceptor for the enzyme in this species is believed to be ubiquinone. Couples the redox reaction to proton translocation (for every two electrons transferred, four hydrogen ions are translocated across the cytoplasmic membrane), and thus conserves the redox energy in a proton gradient. In Citrobacter koseri (strain ATCC BAA-895 / CDC 4225-83 / SGSC4696), this protein is NADH-quinone oxidoreductase subunit C/D.